We begin with the raw amino-acid sequence, 190 residues long: Peptidyl-tRNA hydrolase (190 aa).

Tyr-14 provides a ligand contact to tRNA. Residue His-19 is the Proton acceptor of the active site. Positions 64, 66, and 112 each coordinate tRNA.

The protein belongs to the PTH family. As to quaternary structure, monomer.

It localises to the cytoplasm. The enzyme catalyses an N-acyl-L-alpha-aminoacyl-tRNA + H2O = an N-acyl-L-amino acid + a tRNA + H(+). Hydrolyzes ribosome-free peptidyl-tRNAs (with 1 or more amino acids incorporated), which drop off the ribosome during protein synthesis, or as a result of ribosome stalling. In terms of biological role, catalyzes the release of premature peptidyl moieties from peptidyl-tRNA molecules trapped in stalled 50S ribosomal subunits, and thus maintains levels of free tRNAs and 50S ribosomes. In Chlorobium phaeovibrioides (strain DSM 265 / 1930) (Prosthecochloris vibrioformis (strain DSM 265)), this protein is Peptidyl-tRNA hydrolase.